A 577-amino-acid polypeptide reads, in one-letter code: Arginine--tRNA ligase (577 aa).

The 'HIGH' region signature appears at Pro122–His132.

The protein belongs to the class-I aminoacyl-tRNA synthetase family. Monomer.

It is found in the cytoplasm. It carries out the reaction tRNA(Arg) + L-arginine + ATP = L-arginyl-tRNA(Arg) + AMP + diphosphate. This is Arginine--tRNA ligase from Citrobacter koseri (strain ATCC BAA-895 / CDC 4225-83 / SGSC4696).